The sequence spans 77 residues: Small, acid-soluble spore protein Tlp (77 aa).

It belongs to the Tlp family.

The protein localises to the spore core. This chain is Small, acid-soluble spore protein Tlp, found in Geobacillus sp. (strain WCH70).